The primary structure comprises 259 residues: Protein odd-skipped-related 1 (259 aa).

3 consecutive C2H2-type zinc fingers follow at residues 168-190, 196-218, and 224-246; these read FVCK…ERTH, YTCD…RYIH, and FKCQ…KTLH.

This sequence belongs to the Odd C2H2-type zinc-finger protein family. In terms of tissue distribution, at early gastrula stage, expressed in the involuting mesoderm and endoderm. During neurulation, expressed in the pronephric primordium, following expression of osr2. During tailbud (stage 35), expressed in the rectal diverticulum and in the kidney ducts.

It localises to the nucleus. Functionally, transcriptional repressor. Required for pronephric kidney development. The polypeptide is Protein odd-skipped-related 1 (Xenopus laevis (African clawed frog)).